The following is a 150-amino-acid chain: Ribosome maturation factor RimP (150 aa).

Belongs to the RimP family.

The protein localises to the cytoplasm. In terms of biological role, required for maturation of 30S ribosomal subunits. This Thermotoga sp. (strain RQ2) protein is Ribosome maturation factor RimP.